Consider the following 217-residue polypeptide: Adenylate kinase (217 aa).

10–15 (GAGKGT) contributes to the ATP binding site. The segment at 30 to 59 (STGDMFRAAMKEGTPLGLQAKQYMDRGDLV) is NMP. Residues Thr-31, Arg-36, 57–59 (DLV), 85–88 (GFPR), and Gln-92 contribute to the AMP site. The segment at 126-163 (GRRICRNCGATYHLIFHPPAKPGVCDKCGGELYQRADD) is LID. Arg-127 provides a ligand contact to ATP. Zn(2+) is bound by residues Cys-130 and Cys-133. Residue 136–137 (TY) coordinates ATP. Zn(2+) contacts are provided by Cys-150 and Cys-153. AMP-binding residues include Arg-160 and Arg-171. Gln-199 lines the ATP pocket.

This sequence belongs to the adenylate kinase family. As to quaternary structure, monomer.

The protein resides in the cytoplasm. The enzyme catalyses AMP + ATP = 2 ADP. The protein operates within purine metabolism; AMP biosynthesis via salvage pathway; AMP from ADP: step 1/1. Catalyzes the reversible transfer of the terminal phosphate group between ATP and AMP. Plays an important role in cellular energy homeostasis and in adenine nucleotide metabolism. The sequence is that of Adenylate kinase from Geobacillus stearothermophilus (Bacillus stearothermophilus).